Consider the following 320-residue polypeptide: Sliding-clamp-loader large subunit (320 aa).

ATP contacts are provided by residues 12–15 (EQKY), Ile24, 53–58 (GTGKTT), and Arg205.

The protein belongs to the Tevenvirinae sliding-clamp-loader large subunit family. In terms of assembly, the sliding-clamp-loader consists of 4 large subunits and 1 small subunit. Interacts with the sliding clamp; this interaction allows the sliding-clamp-loader to open the sliding clamp. Part of the replicase complex that includes the DNA polymerase, the polymerase clamp, the clamp loader complex, the single-stranded DNA binding protein, the primase, the helicase and the helicase assembly factor.

In terms of biological role, forms the sliding-clamp-loader together with the small subunit. Functions as an ATPase enzyme. The clamp loader holds the clamp in an open conformation and places it onto the DNA. 4 ATP molecules must bind to the sliding-clamp-loader before the latter can open the sliding clamp. ATP hydrolysis triggers the detachment of the sliding clamp from the sliding-clamp-loader, freeing the sliding clamp to track along DNA. This Escherichia phage RB69 (Bacteriophage RB69) protein is Sliding-clamp-loader large subunit (44).